Here is a 252-residue protein sequence, read N- to C-terminus: Chitooligosaccharide deacetylase (252 aa).

Mg(2+) contacts are provided by H61 and H125.

It belongs to the YdjC deacetylase family. ChbG subfamily. Homodimer. It depends on Mg(2+) as a cofactor.

Its subcellular location is the cytoplasm. The enzyme catalyses N,N'-diacetylchitobiose + H2O = N-acetyl-beta-D-glucosaminyl-(1-&gt;4)-D-glucosamine + acetate. It catalyses the reaction diacetylchitobiose-6'-phosphate + H2O = N'-monoacetylchitobiose-6'-phosphate + acetate. It functions in the pathway glycan degradation; chitin degradation. Its function is as follows. Involved in the degradation of chitin. ChbG is essential for growth on the acetylated chitooligosaccharides chitobiose and chitotriose but is dispensable for growth on cellobiose and chitosan dimer, the deacetylated form of chitobiose. Deacetylation of chitobiose-6-P and chitotriose-6-P is necessary for both the activation of the chb promoter by the regulatory protein ChbR and the hydrolysis of phosphorylated beta-glucosides by the phospho-beta-glucosidase ChbF. Catalyzes the removal of only one acetyl group from chitobiose-6-P to yield monoacetylchitobiose-6-P, the inducer of ChbR and the substrate of ChbF. The sequence is that of Chitooligosaccharide deacetylase from Salmonella newport (strain SL254).